We begin with the raw amino-acid sequence, 497 residues long: Cytochrome P450 71A16 (497 aa).

Residues methionine 1–phenylalanine 21 traverse the membrane as a helical segment. Cysteine 439 provides a ligand contact to heme.

It belongs to the cytochrome P450 family. Requires heme as cofactor.

It localises to the membrane. Its function is as follows. Possesses triterpene oxidizing activity. Catalyzes the C23 hydroxylation of marneral to form 23-hydroxymarneral. Catalyzes the C23 hydroxylation of marnerol to form 23-hydroxymarnerol. This Arabidopsis thaliana (Mouse-ear cress) protein is Cytochrome P450 71A16 (CYP71A16).